The sequence spans 307 residues: D-alanine--D-alanine ligase (307 aa).

The ATP-grasp domain occupies 101 to 301 (KTVMRAAGVS…FGELVRWMVE (201 aa)). An ATP-binding site is contributed by 127 to 182 (PLTPPYVVKPIAEGSSMGVIIVRDERSHPPQILASDEWVYGEEVLAETYVAGRELT). Mg(2+) is bound by residues aspartate 251, glutamate 268, and asparagine 270.

This sequence belongs to the D-alanine--D-alanine ligase family. Mg(2+) serves as cofactor. Requires Mn(2+) as cofactor.

The protein localises to the cytoplasm. The enzyme catalyses 2 D-alanine + ATP = D-alanyl-D-alanine + ADP + phosphate + H(+). It functions in the pathway cell wall biogenesis; peptidoglycan biosynthesis. Functionally, cell wall formation. The polypeptide is D-alanine--D-alanine ligase (Methylorubrum extorquens (strain PA1) (Methylobacterium extorquens)).